A 204-amino-acid chain; its full sequence is Octanoyltransferase (204 aa).

In terms of domain architecture, BPL/LPL catalytic spans 27–202; sequence QGGEEALLLL…RFQPFLHLHL (176 aa). Residues 65 to 72, 132 to 134, and 145 to 147 each bind substrate; these read RGGDVTYH, SIG, and GFA. Cys163 functions as the Acyl-thioester intermediate in the catalytic mechanism.

It belongs to the LipB family.

It localises to the cytoplasm. It carries out the reaction octanoyl-[ACP] + L-lysyl-[protein] = N(6)-octanoyl-L-lysyl-[protein] + holo-[ACP] + H(+). It participates in protein modification; protein lipoylation via endogenous pathway; protein N(6)-(lipoyl)lysine from octanoyl-[acyl-carrier-protein]: step 1/2. Its function is as follows. Catalyzes the transfer of endogenously produced octanoic acid from octanoyl-acyl-carrier-protein onto the lipoyl domains of lipoate-dependent enzymes. Lipoyl-ACP can also act as a substrate although octanoyl-ACP is likely to be the physiological substrate. The chain is Octanoyltransferase from Geobacter sp. (strain M21).